The following is a 375-amino-acid chain: Phospho-N-acetylmuramoyl-pentapeptide-transferase (375 aa).

10 helical membrane passes run 2–22 (IGLLIGGVLGLVLSAAGTPLF), 55–75 (AVIIGSLVLAYLITHGLLAVL), 82–102 (PTASGLILLLLTVGMAFVGFV), 120–140 (GKIILQALIGTAFAVLALNFP), 158–178 (IPWLDLAFAGPAIGVILFVIW), 198–218 (GLATGATAMITGAYVLISLFQ), 237–257 (PMDLALLAAILTGSLLGFLWW), 264–284 (IFMGDTGSLGLGGALAGFAIF), 289–309 (ILVAVLAGLMVAITLSVIIQV), and 345–365 (WLLSLMCVTVGLAIFYGDWLI).

It belongs to the glycosyltransferase 4 family. MraY subfamily. The cofactor is Mg(2+).

It localises to the cell membrane. The catalysed reaction is UDP-N-acetyl-alpha-D-muramoyl-L-alanyl-gamma-D-glutamyl-meso-2,6-diaminopimeloyl-D-alanyl-D-alanine + di-trans,octa-cis-undecaprenyl phosphate = di-trans,octa-cis-undecaprenyl diphospho-N-acetyl-alpha-D-muramoyl-L-alanyl-D-glutamyl-meso-2,6-diaminopimeloyl-D-alanyl-D-alanine + UMP. Its pathway is cell wall biogenesis; peptidoglycan biosynthesis. In terms of biological role, catalyzes the initial step of the lipid cycle reactions in the biosynthesis of the cell wall peptidoglycan: transfers peptidoglycan precursor phospho-MurNAc-pentapeptide from UDP-MurNAc-pentapeptide onto the lipid carrier undecaprenyl phosphate, yielding undecaprenyl-pyrophosphoryl-MurNAc-pentapeptide, known as lipid I. The chain is Phospho-N-acetylmuramoyl-pentapeptide-transferase from Micrococcus luteus (strain ATCC 4698 / DSM 20030 / JCM 1464 / CCM 169 / CCUG 5858 / IAM 1056 / NBRC 3333 / NCIMB 9278 / NCTC 2665 / VKM Ac-2230) (Micrococcus lysodeikticus).